We begin with the raw amino-acid sequence, 591 residues long: BRCA1-associated protein (591 aa).

Ser-52 carries the post-translational modification Phosphoserine. A compositionally biased stretch (basic and acidic residues) spans 82–93 (DEVRDTVEEKKP). The tract at residues 82 to 124 (DEVRDTVEEKKPSAAPVSAQRSREQSESVNTAPESPSKQLPDQ) is disordered. Residues 108-124 (ESVNTAPESPSKQLPDQ) show a composition bias toward polar residues. Phosphoserine occurs at positions 116 and 118. The RING-type zinc-finger motif lies at 263-303 (CTVCLERMDESVNGILTTLCNHSFHSQCLQRWDDTTCPVCR). The UBP-type; degenerate zinc finger occupies 300–392 (PVCRYCQTPE…GKIVQYECEG (93 aa)). Cys-316, Cys-319, Cys-328, Cys-331, Cys-336, His-343, His-347, and His-353 together coordinate Zn(2+). The stretch at 430 to 536 (EKDTAEEINN…EIQEQLRDVM (107 aa)) forms a coiled coil. The segment at 563–591 (IAMASAPNPPSSGAGGKLQSRKGRSKRGK) is disordered. Positions 581-591 (QSRKGRSKRGK) are enriched in basic residues.

As to quaternary structure, interacts with the nuclear localization signal of BRCA1 and with the N-terminal of KSR1. The C-terminal portion of BRCA1 interacts with DDB1. In terms of tissue distribution, isoform 2 is highly expressed in testis, lower levels in brain, heart, lung, stomach, colon, uterus, liver and kidney. Isoform 1 is only expressed in the testis. Isoform 2 is predominant over isoform 1 in both fetal and adult testis.

The protein resides in the cytoplasm. It carries out the reaction S-ubiquitinyl-[E2 ubiquitin-conjugating enzyme]-L-cysteine + [acceptor protein]-L-lysine = [E2 ubiquitin-conjugating enzyme]-L-cysteine + N(6)-ubiquitinyl-[acceptor protein]-L-lysine.. It participates in protein modification; protein ubiquitination. Functionally, negatively regulates MAP kinase activation by limiting the formation of Raf/MEK complexes probably by inactivation of the KSR1 scaffold protein. Also acts as a Ras responsive E3 ubiquitin ligase that, on activation of Ras, is modified by auto-polyubiquitination resulting in the release of inhibition of Raf/MEK complex formation. May also act as a cytoplasmic retention protein with a role in regulating nuclear transport. In Mus musculus (Mouse), this protein is BRCA1-associated protein.